Here is a 772-residue protein sequence, read N- to C-terminus: Phosphoribosylformylglycinamidine synthase subunit PurL (772 aa).

Residue His62 is part of the active site. 2 residues coordinate ATP: Tyr65 and Lys109. Glu111 is a Mg(2+) binding site. Residues Ser112–His115 and Arg134 each bind substrate. His113 functions as the Proton acceptor in the catalytic mechanism. Asp135 serves as a coordination point for Mg(2+). A substrate-binding site is contributed by Gln259. Asp287 serves as a coordination point for Mg(2+). Glu331 to Gln333 is a substrate binding site. The ATP site is built by Asp519 and Gly556. Asn557 contacts Mg(2+). Ser559 serves as a coordination point for substrate.

It belongs to the FGAMS family. Monomer. Part of the FGAM synthase complex composed of 1 PurL, 1 PurQ and 2 PurS subunits.

Its subcellular location is the cytoplasm. The enzyme catalyses N(2)-formyl-N(1)-(5-phospho-beta-D-ribosyl)glycinamide + L-glutamine + ATP + H2O = 2-formamido-N(1)-(5-O-phospho-beta-D-ribosyl)acetamidine + L-glutamate + ADP + phosphate + H(+). It participates in purine metabolism; IMP biosynthesis via de novo pathway; 5-amino-1-(5-phospho-D-ribosyl)imidazole from N(2)-formyl-N(1)-(5-phospho-D-ribosyl)glycinamide: step 1/2. In terms of biological role, part of the phosphoribosylformylglycinamidine synthase complex involved in the purines biosynthetic pathway. Catalyzes the ATP-dependent conversion of formylglycinamide ribonucleotide (FGAR) and glutamine to yield formylglycinamidine ribonucleotide (FGAM) and glutamate. The FGAM synthase complex is composed of three subunits. PurQ produces an ammonia molecule by converting glutamine to glutamate. PurL transfers the ammonia molecule to FGAR to form FGAM in an ATP-dependent manner. PurS interacts with PurQ and PurL and is thought to assist in the transfer of the ammonia molecule from PurQ to PurL. This Leifsonia xyli subsp. xyli (strain CTCB07) protein is Phosphoribosylformylglycinamidine synthase subunit PurL.